We begin with the raw amino-acid sequence, 114 residues long: Large ribosomal subunit protein eL30 (114 aa).

It belongs to the eukaryotic ribosomal protein eL30 family.

This is Large ribosomal subunit protein eL30 (RPL30) from Branchiostoma belcheri (Amphioxus).